Consider the following 342-residue polypeptide: 29 kDa ribonucleoprotein, chloroplastic (342 aa).

The N-terminal 65 residues, 1–65, are a transit peptide targeting the chloroplast; sequence MSASASSLSA…PAEYPSRFVR (65 aa). Residues 99-177 form the RRM 1 domain; the sequence is LKLFVGNLSF…RPLRVNAGPP (79 aa). A phosphoserine mark is found at serine 107 and serine 204. Residues 167–255 are disordered; the sequence is GRPLRVNAGP…GSGSGSGSGS (89 aa). Positions 178-256 are linker (Gly-rich); it reads PPKREESFSR…SGSGSGSGSG (79 aa). Gly residues-rich tracts occupy residues 190-237 and 245-255; these read RSGG…GYGG and SGSGSGSGSGS. One can recognise an RRM 2 domain in the interval 257 to 335; the sequence is NRLYVGNLSW…RQIRVSEAEA (79 aa).

The protein localises to the plastid. Its subcellular location is the chloroplast. Its function is as follows. Stabilizes specific chloroplast mRNAs. Required for normal chloroplast development under cold stress conditions by stabilizing transcripts of numerous mRNAs under these conditions. The protein is 29 kDa ribonucleoprotein, chloroplastic of Arabidopsis thaliana (Mouse-ear cress).